A 399-amino-acid polypeptide reads, in one-letter code: Phosphoglycerate kinase (399 aa).

Residues 22 to 24, Arg-38, 61 to 64, Arg-120, and Arg-153 each bind substrate; these read DFN and HLGR. Residues Lys-204, Glu-326, and 353–356 each bind ATP; that span reads GGDT.

Belongs to the phosphoglycerate kinase family. In terms of assembly, monomer.

It localises to the cytoplasm. The enzyme catalyses (2R)-3-phosphoglycerate + ATP = (2R)-3-phospho-glyceroyl phosphate + ADP. Its pathway is carbohydrate degradation; glycolysis; pyruvate from D-glyceraldehyde 3-phosphate: step 2/5. The polypeptide is Phosphoglycerate kinase (Geotalea daltonii (strain DSM 22248 / JCM 15807 / FRC-32) (Geobacter daltonii)).